We begin with the raw amino-acid sequence, 186 residues long: Prorelaxin 1 (186 aa).

Residues 1–22 (MSSRLLLQLLGFWLFLSQPCRA) form the signal peptide. 3 disulfide bridges follow: C36–C173, C48–C186, and C172–C177. A propeptide spans 58 to 158 (SQEEPAPLAR…LKYLGSDAQS (101 aa)) (connecting peptide). Residue Q163 is modified to Pyrrolidone carboxylic acid.

It belongs to the insulin family. In terms of assembly, heterodimer of a B chain and an A chain linked by two disulfide bonds.

It localises to the secreted. In terms of biological role, relaxin is an ovarian hormone that acts with estrogen to produce dilatation of the birth canal in many mammals. In Rattus norvegicus (Rat), this protein is Prorelaxin 1 (Rln1).